The primary structure comprises 572 residues: Urease subunit alpha (572 aa).

The region spanning 134-572 is the Urease domain; that stretch reads AGIDSHIHLI…ASMNQRYFFG (439 aa). Residues His139, His141, and Lys222 each coordinate Ni(2+). At Lys222 the chain carries N6-carboxylysine. Residue His224 participates in substrate binding. The Ni(2+) site is built by His251 and His277. His325 serves as the catalytic Proton donor. Ni(2+) is bound at residue Asp365.

This sequence belongs to the metallo-dependent hydrolases superfamily. Urease alpha subunit family. As to quaternary structure, heterotrimer of UreA (gamma), UreB (beta) and UreC (alpha) subunits. Three heterotrimers associate to form the active enzyme. Requires Ni cation as cofactor. Post-translationally, carboxylation allows a single lysine to coordinate two nickel ions.

Its subcellular location is the cytoplasm. It carries out the reaction urea + 2 H2O + H(+) = hydrogencarbonate + 2 NH4(+). The protein operates within nitrogen metabolism; urea degradation; CO(2) and NH(3) from urea (urease route): step 1/1. The polypeptide is Urease subunit alpha (Yersinia pseudotuberculosis serotype O:1b (strain IP 31758)).